Reading from the N-terminus, the 617-residue chain is Vacuolar protein sorting-associated protein 33B (617 aa).

The residue at position 2 (alanine 2) is an N-acetylalanine.

It belongs to the STXBP/unc-18/SEC1 family. Interacts with RAB11A and VIPAS39. Interacts with RAB25. Associates with adapter protein complex 3 (AP-3), clathrin:AP-3 and clathrin:HGS complexes. In terms of assembly, (Microbial infection) Interacts with M.tuberculosis PtpA. Post-translationally, phosphorylated on tyrosine residues. (Microbial infection) Dephosphorylated by M.tuberculosis PtpA, which induces the reduction of host phagolysosome fusion in M.tuberculosis-infected macrophages. In terms of tissue distribution, ubiquitous; highly expressed in testis and low expression in the lung.

It is found in the late endosome membrane. The protein resides in the lysosome membrane. It localises to the early endosome. The protein localises to the cytoplasmic vesicle. Its subcellular location is the clathrin-coated vesicle. It is found in the recycling endosome. May play a role in vesicle-mediated protein trafficking to lysosomal compartments and in membrane docking/fusion reactions of late endosomes/lysosomes. Required for proper trafficking and targeting of the collagen-modifying enzyme lysyl hydroxylase 3 (LH3) to intracellular collagen. Mediates phagolysosomal fusion in macrophages. Proposed to be involved in endosomal maturation implicating VIPAS39. In epithelial cells, the VPS33B:VIPAS39 complex may play a role in the apical recycling pathway and in the maintenance of the apical-basolateral polarity. Seems to be involved in the sorting of specific cargos from the trans-Golgi network to alpha-granule-destined multivesicular bodies (MVBs) promoting MVBs maturation in megakaryocytes. In Homo sapiens (Human), this protein is Vacuolar protein sorting-associated protein 33B (VPS33B).